The sequence spans 20 residues: Short cationic peptide-4b (20 aa).

The residue at position 20 (E20) is a Glutamic acid 1-amide.

Expressed by the venom gland.

The protein localises to the secreted. The sequence is that of Short cationic peptide-4b from Cupiennius salei (American wandering spider).